The primary structure comprises 914 residues: Protein translocase subunit SecA (914 aa).

ATP contacts are provided by residues glutamine 87, 105-109, and aspartate 508; that span reads GEGKT. Positions 898, 900, 909, and 910 each coordinate Zn(2+).

The protein belongs to the SecA family. As to quaternary structure, monomer and homodimer. Part of the essential Sec protein translocation apparatus which comprises SecA, SecYEG and auxiliary proteins SecDF-YajC and YidC. The cofactor is Zn(2+).

The protein resides in the cell inner membrane. Its subcellular location is the cytoplasm. The catalysed reaction is ATP + H2O + cellular proteinSide 1 = ADP + phosphate + cellular proteinSide 2.. Functionally, part of the Sec protein translocase complex. Interacts with the SecYEG preprotein conducting channel. Has a central role in coupling the hydrolysis of ATP to the transfer of proteins into and across the cell membrane, serving both as a receptor for the preprotein-SecB complex and as an ATP-driven molecular motor driving the stepwise translocation of polypeptide chains across the membrane. The polypeptide is Protein translocase subunit SecA (Xylella fastidiosa (strain 9a5c)).